A 658-amino-acid polypeptide reads, in one-letter code: Glycogen debranching enzyme (658 aa).

Asp-336 acts as the Nucleophile in catalysis. Glu-371 serves as the catalytic Proton donor. Residues 459 to 483 (EANGEENRDGTNSNYSDNHGKEGLG) are disordered.

The protein belongs to the glycosyl hydrolase 13 family.

The enzyme catalyses Hydrolysis of (1-&gt;6)-alpha-D-glucosidic linkages to branches with degrees of polymerization of three or four glucose residues in limit dextrin.. The protein operates within glycan degradation; glycogen degradation. Removes maltotriose and maltotetraose chains that are attached by 1,6-alpha-linkage to the limit dextrin main chain, generating a debranched limit dextrin. This chain is Glycogen debranching enzyme, found in Salmonella agona (strain SL483).